A 244-amino-acid polypeptide reads, in one-letter code: RAD51-like protein 1 (244 aa).

Interacts with brc-2 and rad-51.

The protein resides in the nucleus. In terms of biological role, has a role in the homologous recombination repair (HRR) of genomic DNA during meiosis. Required for rad-51 recruitment onto ssDNA gaps generated at stalled replication fork barriers. The chain is RAD51-like protein 1 from Caenorhabditis briggsae.